We begin with the raw amino-acid sequence, 90 residues long: U7-theraphotoxin-Hhn1a 7 (90 aa).

The first 19 residues, 1 to 19 (MKTAIFTVVLALAVFAVLS), serve as a signal peptide directing secretion. Residues 20–50 (FGWEANEKALSEGFTELIHEKEAASETEARE) constitute a propeptide that is removed on maturation. Disulfide bonds link Cys51–Cys65, Cys58–Cys70, and Cys64–Cys81.

The protein belongs to the neurotoxin 10 (Hwtx-1) family. 13 (Hntx-13) subfamily. Expressed by the venom gland.

Its subcellular location is the secreted. Its function is as follows. Ion channel inhibitor. The chain is U7-theraphotoxin-Hhn1a 7 from Cyriopagopus hainanus (Chinese bird spider).